The sequence spans 426 residues: Antigen EM13 (426 aa).

An F-BAR domain is found at 1–240 (MIQERADIEK…TVAKVDADAD (240 aa)). 2 disordered regions span residues 287 to 315 (LTSL…ISTS) and 350 to 369 (ISKE…FVDD). Polar residues predominate over residues 305 to 315 (TTDSGSNISTS). The SH3 domain maps to 371 to 426 (RPGVPIRALYDYVGVEADELSFNSGDLFEKLEDEDEQGWCKGRKDGRVGLYPRQLR).

This chain is Antigen EM13 (EM13), found in Echinococcus multilocularis (Fox tapeworm).